We begin with the raw amino-acid sequence, 497 residues long: Cytochrome P450 2D19 (497 aa).

C443 serves as a coordination point for heme.

It belongs to the cytochrome P450 family. The cofactor is heme.

It localises to the endoplasmic reticulum membrane. The protein localises to the microsome membrane. The enzyme catalyses an organic molecule + reduced [NADPH--hemoprotein reductase] + O2 = an alcohol + oxidized [NADPH--hemoprotein reductase] + H2O + H(+). Responsible for the metabolism of many drugs and environmental chemicals that it oxidizes. The sequence is that of Cytochrome P450 2D19 (CYP2D19) from Callithrix jacchus (White-tufted-ear marmoset).